Reading from the N-terminus, the 513-residue chain is Xylose import ATP-binding protein XylG (513 aa).

ABC transporter domains are found at residues 5 to 242 and 259 to 505; these read LEMK…VGRE and LRIE…LRSE. 37–44 is an ATP binding site; sequence GENGSGKS.

The protein belongs to the ABC transporter superfamily. Xylose importer (TC 3.A.1.2.4) family. In terms of assembly, the complex is composed of two ATP-binding proteins (XylG), two transmembrane proteins (XylH) and a solute-binding protein (XylF).

The protein localises to the cell inner membrane. The catalysed reaction is D-xylose(out) + ATP + H2O = D-xylose(in) + ADP + phosphate + H(+). In terms of biological role, part of the ABC transporter complex XylFGH involved in xylose import. Responsible for energy coupling to the transport system. The polypeptide is Xylose import ATP-binding protein XylG (Shigella flexneri serotype 5b (strain 8401)).